The following is a 358-amino-acid chain: Isopentenyl-diphosphate delta-isomerase (358 aa).

Substrate is bound at residue 12 to 13; the sequence is RK. Residues 69–71, S99, and N128 contribute to the FMN site; that span reads AMT. Q158 contacts substrate. E159 is a Mg(2+) binding site. FMN contacts are provided by residues K190, T220, 267–269, and 288–289; these read GIR and AG.

Belongs to the IPP isomerase type 2 family. Homooctamer. Dimer of tetramers. FMN serves as cofactor. The cofactor is NADPH. Mg(2+) is required as a cofactor.

The protein localises to the cytoplasm. The catalysed reaction is isopentenyl diphosphate = dimethylallyl diphosphate. Its function is as follows. Involved in the biosynthesis of isoprenoids. Catalyzes the 1,3-allylic rearrangement of the homoallylic substrate isopentenyl (IPP) to its allylic isomer, dimethylallyl diphosphate (DMAPP). The polypeptide is Isopentenyl-diphosphate delta-isomerase (Listeria monocytogenes serotype 4a (strain HCC23)).